We begin with the raw amino-acid sequence, 245 residues long: Ribonuclease P protein component 3 (245 aa).

The protein belongs to the eukaryotic/archaeal RNase P protein component 3 family. As to quaternary structure, consists of a catalytic RNA component and at least 4-5 protein subunits.

It localises to the cytoplasm. It catalyses the reaction Endonucleolytic cleavage of RNA, removing 5'-extranucleotides from tRNA precursor.. Its function is as follows. Part of ribonuclease P, a protein complex that generates mature tRNA molecules by cleaving their 5'-ends. This chain is Ribonuclease P protein component 3, found in Methanothermobacter thermautotrophicus (strain ATCC 29096 / DSM 1053 / JCM 10044 / NBRC 100330 / Delta H) (Methanobacterium thermoautotrophicum).